An 859-amino-acid polypeptide reads, in one-letter code: Fanconi anemia group B protein (859 aa).

Thr2 bears the N-acetylthreonine mark.

In terms of assembly, belongs to the multisubunit FA complex composed of FANCA, FANCB, FANCC, FANCE, FANCF, FANCG, FANCL/PHF9 and FANCM. The complex is not found in FA patients.

It is found in the nucleus. Its function is as follows. DNA repair protein required for FANCD2 ubiquitination. The polypeptide is Fanconi anemia group B protein (FANCB) (Homo sapiens (Human)).